The sequence spans 77 residues: Acyl carrier protein (77 aa).

The 76-residue stretch at 2–77 (STIEERVKKI…EAIDYVVSHQ (76 aa)) folds into the Carrier domain. O-(pantetheine 4'-phosphoryl)serine is present on S37.

It belongs to the acyl carrier protein (ACP) family. In terms of processing, 4'-phosphopantetheine is transferred from CoA to a specific serine of apo-ACP by AcpS. This modification is essential for activity because fatty acids are bound in thioester linkage to the sulfhydryl of the prosthetic group.

The protein localises to the cytoplasm. It functions in the pathway lipid metabolism; fatty acid biosynthesis. Functionally, carrier of the growing fatty acid chain in fatty acid biosynthesis. The polypeptide is Acyl carrier protein (Oceanospirillum linum).